The following is a 226-amino-acid chain: Uracil-DNA glycosylase (226 aa).

The active-site Proton acceptor is Asp64.

The protein belongs to the uracil-DNA glycosylase (UDG) superfamily. UNG family.

It localises to the cytoplasm. The enzyme catalyses Hydrolyzes single-stranded DNA or mismatched double-stranded DNA and polynucleotides, releasing free uracil.. Excises uracil residues from the DNA which can arise as a result of misincorporation of dUMP residues by DNA polymerase or due to deamination of cytosine. The polypeptide is Uracil-DNA glycosylase (Vibrio vulnificus (strain CMCP6)).